Here is a 200-residue protein sequence, read N- to C-terminus: Trem-like transcript 4 protein (200 aa).

An N-terminal signal peptide occupies residues 1 to 25 (MAWGGVHTCCFHLCCCCSWPQGAVP). Residues 26 to 126 (EELHKHPGQT…NIITVLRNIS (101 aa)) form the Ig-like V-type domain. Residues cysteine 40 and cysteine 109 are joined by a disulfide bond. An N-linked (GlcNAc...) asparagine glycan is attached at asparagine 93.

It is found in the secreted. In terms of biological role, positively regulates Toll-like receptor TLR7 signaling in macrophages. The protein is Trem-like transcript 4 protein (TREML4) of Homo sapiens (Human).